A 371-amino-acid chain; its full sequence is Liposome tubulation protein MamY (371 aa).

Residues 1–18 (MLMNFVNNVSKTINGGAR) lie on the Cytoplasmic side of the membrane. Residues 19–39 (IVYVGSFSWAVLSLLFVTAFS) traverse the membrane as a helical segment. Residues 40 to 51 (GWNNIFSMLPHE) lie on the Lumenal side of the membrane. Residues 52–72 (IFILVLTISLPIALIVLIFML) form a helical membrane-spanning segment. The Cytoplasmic segment spans residues 73 to 371 (SQIVRTVESV…LIDGTPISDA (299 aa)).

The protein belongs to the magnetosome MamY family. Probably interacts with MamX and MamZ proteins.

The protein localises to the magnetosome membrane. In terms of biological role, may be involved in constriction of the cell inner membrane to form mature magnetosomes. Binds cardiolipin and liposomes. May function with MamX, MamZ amd Mms6 in biomineralization. This chain is Liposome tubulation protein MamY, found in Magnetospirillum gryphiswaldense (strain DSM 6361 / JCM 21280 / NBRC 15271 / MSR-1).